The following is a 316-amino-acid chain: Probable inactive poly [ADP-ribose] polymerase SRO4 (316 aa).

A disordered region spans residues M1–E28. A compositionally biased stretch (low complexity) spans E14 to S23. Residues E28 to L255 enclose the PARP catalytic domain. The 72-residue stretch at K243–K314 folds into the RST domain.

It is found in the nucleus. Functionally, probable inactive ADP-ribosyltransferase that may be involved in stress and developmental responses. In Arabidopsis thaliana (Mouse-ear cress), this protein is Probable inactive poly [ADP-ribose] polymerase SRO4 (SRO4).